A 134-amino-acid polypeptide reads, in one-letter code: Small ribosomal subunit protein uS9 (134 aa).

The segment at 109–134 (DARRTEPHKPSKSSKGPRAKRQKSYR) is disordered. The span at 118–134 (PSKSSKGPRAKRQKSYR) shows a compositional bias: basic residues.

It belongs to the universal ribosomal protein uS9 family.

In Methanococcus maripaludis (strain C7 / ATCC BAA-1331), this protein is Small ribosomal subunit protein uS9.